The sequence spans 288 residues: Quinate/shikimate dehydrogenase (288 aa).

Positions 71 and 107 each coordinate substrate. Residues 132 to 135, 155 to 158, Lys205, 232 to 235, and Gly255 each bind NAD(+); these read AGGA, NRRD, and CVYN.

Belongs to the shikimate dehydrogenase family. In terms of assembly, homodimer.

It carries out the reaction L-quinate + NAD(+) = 3-dehydroquinate + NADH + H(+). It catalyses the reaction L-quinate + NADP(+) = 3-dehydroquinate + NADPH + H(+). The enzyme catalyses shikimate + NADP(+) = 3-dehydroshikimate + NADPH + H(+). The catalysed reaction is shikimate + NAD(+) = 3-dehydroshikimate + NADH + H(+). Its pathway is metabolic intermediate biosynthesis; chorismate biosynthesis; chorismate from D-erythrose 4-phosphate and phosphoenolpyruvate: step 4/7. Functionally, the actual biological function of YdiB remains unclear, nor is it known whether 3-dehydroshikimate or quinate represents the natural substrate. Catalyzes the reversible NAD-dependent reduction of both 3-dehydroshikimate (DHSA) and 3-dehydroquinate to yield shikimate (SA) and quinate, respectively. It can use both NAD or NADP for catalysis, however it has higher catalytic efficiency with NAD. This chain is Quinate/shikimate dehydrogenase, found in Escherichia coli O157:H7.